Reading from the N-terminus, the 1581-residue chain is Maestro heat-like repeat-containing protein family member 2B (1581 aa).

HEAT repeat units lie at residues 123–160 (FMMMTLLTMQTMLRLVEDENMRQTFCIALENFSKSIYK), 305–342 (ANPVDLLDFFDEQIRSTNEAVRTGILTLLRSTINAEEP), 401–441 (MSNR…LVIG), 464–501 (DYLFNIIRILIMAEEKKKRDIQESTALVVSTGAVKLPS), 526–543 (AIGLLKIMPEIIHPKLAE), 544–580 (MWKTRMPALLQPLEGSNASIVLWETMLLQLLKESLWK), 658–695 (ENHLDIVLNVLKTFQDKEKFFVNRCKGIFSGKKSLTKT), 773–815 (TYKE…LKPA), 960–997 (CQEVDRLQGLQEGLDSEDEQVQIKISSKIAKIVCKFIP), 1017–1055 (PLCTKACGIWMIAALKEHGALLEDQLLEILSTIYHHMPV), 1112–1150 (KLMRALIKKLVARLEDDIAGTEAISVACAIYEVILTGAH), 1153–1191 (HLYPELFTLLLKLVSCSLGQKMPMSTLSQRRRVMQLGER), 1254–1291 (GVILDIMEHLLSSLTSSSENYRITGMAFFSELMKEPIL), 1295–1332 (GNLRDVLIFMDQNARDSNAILRQMAIRGLGNTACGAPH), 1359–1379 (CESLKALKKILELLTERDINF), and 1380–1416 (YFKEIVLQTRTFFEDEQDDVRLTAISLFEDLATLTGR).

Found in a complex at least composed of MROH2B isoform 2, PRKACA isoform 2 and TCP11. Interacts with PRKACA isoform 2. Interacts with TCP11. Constitutively phosphorylated on serine and threonine residues in acrosomal region of the sperm head, midpiece and flagellar regions of noncapacitated spermatozoa. Phosphorylation on tyrosine residues increases upon sperm capacitation within the acrosomal and tail regions in a protein kinase A (PKA)-dependent signaling pathway. Expressed strongly in round spermatids and fully mature spermatozoa. Expressed weakly in pachytene spermatocytes (at protein level). Isoform 2 is specifically expressed in the testis. Isoform 2 is expressed in pachytene spermatocytes and round spermatids. Isoform 3 is weakly expressed in testis.

Its subcellular location is the cytoplasm. The protein resides in the cytoplasmic vesicle. It localises to the secretory vesicle. It is found in the acrosome. The protein localises to the cell projection. Its subcellular location is the cilium. The protein resides in the flagellum. In terms of biological role, may play a role in the process of sperm capacitation. The protein is Maestro heat-like repeat-containing protein family member 2B of Mus musculus (Mouse).